The following is a 226-amino-acid chain: UPF0502 protein azo0627 (226 aa).

It belongs to the UPF0502 family.

The protein is UPF0502 protein azo0627 of Azoarcus sp. (strain BH72).